Reading from the N-terminus, the 196-residue chain is Peptide deformylase (196 aa).

Positions 105 and 147 each coordinate Fe cation. The active site involves E148. H151 is a Fe cation binding site.

This sequence belongs to the polypeptide deformylase family. The cofactor is Fe(2+).

The catalysed reaction is N-terminal N-formyl-L-methionyl-[peptide] + H2O = N-terminal L-methionyl-[peptide] + formate. In terms of biological role, removes the formyl group from the N-terminal Met of newly synthesized proteins. Requires at least a dipeptide for an efficient rate of reaction. N-terminal L-methionine is a prerequisite for activity but the enzyme has broad specificity at other positions. This is Peptide deformylase from Flavobacterium johnsoniae (strain ATCC 17061 / DSM 2064 / JCM 8514 / BCRC 14874 / CCUG 350202 / NBRC 14942 / NCIMB 11054 / UW101) (Cytophaga johnsonae).